Reading from the N-terminus, the 323-residue chain is Pectate lyase A (323 aa).

Positions 1-31 are cleaved as a signal peptide; that stretch reads MTNFKWIVAAAGLLFGQVLAAPTATSTHAKR. Asparagine 95 is a glycosylation site (N-linked (GlcNAc...) asparagine). Aspartate 136, aspartate 165, and aspartate 169 together coordinate Ca(2+). Arginine 222 is a catalytic residue.

Belongs to the polysaccharide lyase 1 family. Ca(2+) is required as a cofactor.

It is found in the secreted. It catalyses the reaction Eliminative cleavage of (1-&gt;4)-alpha-D-galacturonan to give oligosaccharides with 4-deoxy-alpha-D-galact-4-enuronosyl groups at their non-reducing ends.. Its function is as follows. Pectinolytic enzyme consist of four classes of enzymes: pectin lyase, polygalacturonase, pectin methylesterase and rhamnogalacturonase. Among pectinolytic enzymes, pectin lyase is the most important in depolymerization of pectin, since it cleaves internal glycosidic bonds of highly methylated pectins. Favors pectate, the anion, over pectin, the methyl ester. This Aspergillus niger protein is Pectate lyase A (plyA).